The chain runs to 358 residues: GMP reductase (358 aa).

NADP(+) is bound by residues 26 to 27 (SR), K78, 130 to 132 (DVA), and 181 to 182 (IG). Positions 182, 184, and 187 each coordinate K(+). C187 functions as the Thioimidate intermediate in the catalytic mechanism. Residue T189 is the Proton donor/acceptor of the active site. R190 contributes to the K(+) binding site. GMP is bound by residues 220-222 (DGG), 243-244 (GG), 269-271 (GMS), and 287-291 (RASEG). Residues M270, 286-287 (YR), and 315-318 (SACT) contribute to the NADP(+) site.

It belongs to the IMPDH/GMPR family. GuaC type 1 subfamily. As to quaternary structure, homotetramer.

The enzyme catalyses IMP + NH4(+) + NADP(+) = GMP + NADPH + 2 H(+). Its function is as follows. Catalyzes the irreversible NADPH-dependent deamination of GMP to IMP. It functions in the conversion of nucleobase, nucleoside and nucleotide derivatives of G to A nucleotides, and in maintaining the intracellular balance of A and G nucleotides. In Caenorhabditis elegans, this protein is GMP reductase.